A 245-amino-acid polypeptide reads, in one-letter code: Thiopurine S-methyltransferase (245 aa).

Ser-14 carries the post-translational modification Phosphoserine. 29–40 (WQDKWVNGNTAF) provides a ligand contact to S-adenosyl-L-methionine. Phe-40 contributes to the substrate binding site. Lys-58 is modified (N6-acetyllysine). Residues Leu-69, Glu-90, 134 to 135 (SI), and Arg-152 each bind S-adenosyl-L-methionine.

It belongs to the class I-like SAM-binding methyltransferase superfamily. TPMT family. As to quaternary structure, monomer.

It is found in the cytoplasm. The enzyme catalyses S-adenosyl-L-methionine + a thiopurine = S-adenosyl-L-homocysteine + a thiopurine S-methylether.. The polypeptide is Thiopurine S-methyltransferase (TPMT) (Pongo pygmaeus (Bornean orangutan)).